Reading from the N-terminus, the 448-residue chain is tRNA modification GTPase MnmE (448 aa).

The (6S)-5-formyl-5,6,7,8-tetrahydrofolate site is built by arginine 22, glutamate 83, and arginine 122. A TrmE-type G domain is found at 219–369; the sequence is GVKTVIVGRP…LESEILKTLK (151 aa). Asparagine 229 is a K(+) binding site. GTP-binding positions include 229 to 234, 248 to 254, and 273 to 276; these read NVGKSS, SDIAGTT, and DTAG. Position 233 (serine 233) interacts with Mg(2+). Residues serine 248, isoleucine 250, and threonine 253 each contribute to the K(+) site. Mg(2+) is bound at residue threonine 254. Lysine 448 is a binding site for (6S)-5-formyl-5,6,7,8-tetrahydrofolate.

This sequence belongs to the TRAFAC class TrmE-Era-EngA-EngB-Septin-like GTPase superfamily. TrmE GTPase family. Homodimer. Heterotetramer of two MnmE and two MnmG subunits. The cofactor is K(+).

Its subcellular location is the cytoplasm. Its function is as follows. Exhibits a very high intrinsic GTPase hydrolysis rate. Involved in the addition of a carboxymethylaminomethyl (cmnm) group at the wobble position (U34) of certain tRNAs, forming tRNA-cmnm(5)s(2)U34. The chain is tRNA modification GTPase MnmE from Acholeplasma laidlawii (strain PG-8A).